A 149-amino-acid chain; its full sequence is IQ domain-containing protein F5 (149 aa).

IQ domains are found at residues 12–41 (ENKA…RAWI) and 68–97 (QEWA…AVRI).

The protein is IQ domain-containing protein F5 (IQCF5) of Bos taurus (Bovine).